Here is a 234-residue protein sequence, read N- to C-terminus: uncharacterized protein (234 aa).

Residues 1–12 are compositionally biased toward low complexity; it reads MGSSSSSSLNNS. The segment at 1 to 184 is disordered; sequence MGSSSSSSLN…TPYLSGANSR (184 aa). Polar residues-rich tracts occupy residues 21 to 40 and 52 to 64; these read TPESQMTVNDNKNDNVSILS and KSTSIPANNNLTP. Over residues 66 to 77 the composition is skewed to low complexity; the sequence is KSRWSFSSSKKS. The segment covering 105 to 120 has biased composition (polar residues); that stretch reads GDFTPSLGNTPKSSFS. Residues 152–167 are compositionally biased toward basic and acidic residues; sequence LGELFRDSIREEREES.

In terms of assembly, interacts with RLK902. Expressed in stems, rosette leaves and roots and weakly in inflorescences.

This is an uncharacterized protein from Arabidopsis thaliana (Mouse-ear cress).